The following is a 365-amino-acid chain: Parathion hydrolase (365 aa).

The segment at residues methionine 1 to glycine 29 is a signal peptide (tat-type signal). 6 residues coordinate Zn(2+): histidine 55, histidine 57, lysine 169, histidine 201, histidine 230, and aspartate 301. Residue lysine 169 is modified to N6-carboxylysine.

The protein belongs to the metallo-dependent hydrolases superfamily. Phosphotriesterase family. As to quaternary structure, homodimer. The cofactor is Zn(2+). Predicted to be exported by the Tat system. The position of the signal peptide cleavage has been experimentally proven.

Its subcellular location is the cell membrane. The catalysed reaction is An aryl dialkyl phosphate + H2O = dialkyl phosphate + an aryl alcohol.. Its function is as follows. Has an unusual substrate specificity for synthetic organophosphate triesters and phosphorofluoridates. All of the phosphate triesters found to be substrates are synthetic compounds. The identity of any naturally occurring substrate for the enzyme is unknown. Has no detectable activity with phosphate monoesters or diesters and no activity as an esterase or protease. It catalyzes the hydrolysis of the insecticide paraoxon at a rate approaching the diffusion limit and thus appears to be optimally evolved for utilizing this synthetic substrate. This Brevundimonas diminuta (Pseudomonas diminuta) protein is Parathion hydrolase (opd).